A 325-amino-acid chain; its full sequence is Quinone oxidoreductase (325 aa).

Belongs to the zinc-containing alcohol dehydrogenase family. Quinone oxidoreductase subfamily.

The catalysed reaction is 2 a quinone + NADPH + H(+) = 2 a 1,4-benzosemiquinone + NADP(+). In Pseudomonas aeruginosa (strain ATCC 15692 / DSM 22644 / CIP 104116 / JCM 14847 / LMG 12228 / 1C / PRS 101 / PAO1), this protein is Quinone oxidoreductase (qor).